The following is a 25-amino-acid chain: Css54 (25 aa).

As to expression, expressed by the venom gland.

Its subcellular location is the secreted. It is found in the target cell membrane. Amphipathic peptide that shows antibacterial activity against E.coli (MIC=12.5 ug/ml) and S.aureus (MIC=12.5 ug/ml). Has hemolytic activity against human erythrocytes (25 uM provokes 83% of hemolysis). May act by disrupting the integrity of the bacterial cell membrane. Increases efficacy of antibiotics (ethambutol, pyrazinamide, isoniazid, rifampicin) when tested against S.aureus, probably by facilitating their incorporation into the bacteria. The protein is Css54 of Centruroides suffusus (Durango bark scorpion).